We begin with the raw amino-acid sequence, 294 residues long: Ribosomal RNA small subunit methyltransferase A (294 aa).

6 residues coordinate S-adenosyl-L-methionine: Asn-29, Val-31, Gly-56, Glu-77, Asp-107, and Asn-126.

This sequence belongs to the class I-like SAM-binding methyltransferase superfamily. rRNA adenine N(6)-methyltransferase family. RsmA subfamily.

The protein localises to the cytoplasm. It catalyses the reaction adenosine(1518)/adenosine(1519) in 16S rRNA + 4 S-adenosyl-L-methionine = N(6)-dimethyladenosine(1518)/N(6)-dimethyladenosine(1519) in 16S rRNA + 4 S-adenosyl-L-homocysteine + 4 H(+). Functionally, specifically dimethylates two adjacent adenosines (A1518 and A1519) in the loop of a conserved hairpin near the 3'-end of 16S rRNA in the 30S particle. May play a critical role in biogenesis of 30S subunits. This is Ribosomal RNA small subunit methyltransferase A from Mycobacterium sp. (strain MCS).